Consider the following 326-residue polypeptide: Malate dehydrogenase (326 aa).

12-18 (GGTGQIA) is a binding site for NAD(+). The substrate site is built by arginine 93 and arginine 99. Residues asparagine 106, glutamine 113, and 130-132 (VGN) each bind NAD(+). Substrate is bound by residues asparagine 132 and arginine 163. Histidine 188 serves as the catalytic Proton acceptor.

Belongs to the LDH/MDH superfamily. MDH type 2 family.

It carries out the reaction (S)-malate + NAD(+) = oxaloacetate + NADH + H(+). In terms of biological role, catalyzes the reversible oxidation of malate to oxaloacetate. In Chlamydia trachomatis serovar A (strain ATCC VR-571B / DSM 19440 / HAR-13), this protein is Malate dehydrogenase.